The following is a 981-amino-acid chain: Helicase-like transcription factor CHR28 (981 aa).

Disordered stretches follow at residues Met1–Arg66 and Lys112–Glu194. Residues Ser46–Ser65 are compositionally biased toward polar residues. Residues Phe119–Pro128 show a composition bias toward pro residues. Polar residues predominate over residues His166 to Asn176. Positions Pro181–Glu194 are enriched in basic and acidic residues. Residues Glu241–Asp526 form the Helicase ATP-binding domain. An ATP-binding site is contributed by Asp254–Thr261. Disordered regions lie at residues Asp293 to Asn337 and Val439 to Asp462. Residues Val439 to Gly451 show a composition bias toward basic residues. The segment at Cys679–Arg718 adopts an RING-type; degenerate zinc-finger fold. Residues Asn779–Pro798 are compositionally biased toward polar residues. Residues Asn779–Asp808 are disordered. Residues Asn799–Asp808 are compositionally biased toward acidic residues. Positions Asp804 to Lys976 constitute a Helicase C-terminal domain.

It belongs to the SNF2/RAD54 helicase family. RAD16 subfamily. In terms of assembly, interacts with SUVR2.

The protein localises to the nucleus. Probable helicase-like transcription factor involved in transcriptional gene silencing. Associates with SUVR2 and contributes to transcriptional gene silencing at RNA-directed DNA methylation (RdDM) target loci but also at RdDM-independent target loci. May be involved in nucleosome positioning to form ordered nucleosome arrays on chromatin. Associates with SUVR2 and functions redundantly with FRG1. Required for the efficient methylation of a broad range of RdDM target loci. In Arabidopsis thaliana (Mouse-ear cress), this protein is Helicase-like transcription factor CHR28.